The primary structure comprises 176 residues: ATP synthase subunit b (176 aa).

Residues 18–38 form a helical membrane-spanning segment; that stretch reads FGLDATVWVSIAMLVFLGILV.

It belongs to the ATPase B chain family. As to quaternary structure, F-type ATPases have 2 components, F(1) - the catalytic core - and F(0) - the membrane proton channel. F(1) has five subunits: alpha(3), beta(3), gamma(1), delta(1), epsilon(1). F(0) has three main subunits: a(1), b(2) and c(10-14). The alpha and beta chains form an alternating ring which encloses part of the gamma chain. F(1) is attached to F(0) by a central stalk formed by the gamma and epsilon chains, while a peripheral stalk is formed by the delta and b chains.

It localises to the cell inner membrane. F(1)F(0) ATP synthase produces ATP from ADP in the presence of a proton or sodium gradient. F-type ATPases consist of two structural domains, F(1) containing the extramembraneous catalytic core and F(0) containing the membrane proton channel, linked together by a central stalk and a peripheral stalk. During catalysis, ATP synthesis in the catalytic domain of F(1) is coupled via a rotary mechanism of the central stalk subunits to proton translocation. Functionally, component of the F(0) channel, it forms part of the peripheral stalk, linking F(1) to F(0). The sequence is that of ATP synthase subunit b from Sphingopyxis alaskensis (strain DSM 13593 / LMG 18877 / RB2256) (Sphingomonas alaskensis).